Consider the following 172-residue polypeptide: 3-hydroxydecanoyl-[acyl-carrier-protein] dehydratase (172 aa).

His71 is an active-site residue.

The protein belongs to the thioester dehydratase family. FabA subfamily. As to quaternary structure, homodimer.

The protein localises to the cytoplasm. The catalysed reaction is a (3R)-hydroxyacyl-[ACP] = a (2E)-enoyl-[ACP] + H2O. It carries out the reaction (3R)-hydroxydecanoyl-[ACP] = (2E)-decenoyl-[ACP] + H2O. The enzyme catalyses (2E)-decenoyl-[ACP] = (3Z)-decenoyl-[ACP]. Its pathway is lipid metabolism; fatty acid biosynthesis. Necessary for the introduction of cis unsaturation into fatty acids. Catalyzes the dehydration of (3R)-3-hydroxydecanoyl-ACP to E-(2)-decenoyl-ACP and then its isomerization to Z-(3)-decenoyl-ACP. Can catalyze the dehydratase reaction for beta-hydroxyacyl-ACPs with saturated chain lengths up to 16:0, being most active on intermediate chain length. This chain is 3-hydroxydecanoyl-[acyl-carrier-protein] dehydratase, found in Aliivibrio salmonicida (strain LFI1238) (Vibrio salmonicida (strain LFI1238)).